A 195-amino-acid chain; its full sequence is MVIGLLKYLTPAVKVQMAARALGLSPAEVAAIDGTLGRVSAMPAVAVVLGGKPLSLATIASVVSDANPSATVGALMPAVQGMVSSDEGASALAKTVVGFMESDPNSDVLVQLLHKVSNLPIVGFGDTQYADPADFLAKGVFPLIRKPEVEVQAAPFTCRQCDHVDHITDVPQTSTFVHKCTSCGFVQMVHRKDVP.

In terms of biological role, assembly factor active in membrane morphogenesis. The polypeptide is Morphogenetic protein (P12) (Pseudomonas phage phi6 (Bacteriophage phi-6)).